The sequence spans 287 residues: Large ribosomal subunit protein uL2 (287 aa).

Residues 221-287 are disordered; it reads RGSVMNPCDH…SKRSRGGRDS (67 aa). A compositionally biased stretch (basic residues) spans 258–287; it reads KTRKKNKPSNKLVVRRRRRVSKRSRGGRDS.

The protein belongs to the universal ribosomal protein uL2 family. Part of the 50S ribosomal subunit. Forms a bridge to the 30S subunit in the 70S ribosome.

Its function is as follows. One of the primary rRNA binding proteins. Required for association of the 30S and 50S subunits to form the 70S ribosome, for tRNA binding and peptide bond formation. It has been suggested to have peptidyltransferase activity; this is somewhat controversial. Makes several contacts with the 16S rRNA in the 70S ribosome. The protein is Large ribosomal subunit protein uL2 of Prochlorococcus marinus (strain AS9601).